The sequence spans 286 residues: Phosducin-like protein 2 (286 aa).

2 positions are modified to phosphoserine: serine 35 and serine 62. The tract at residues 96–286 is thioredoxin fold; that stretch reads FGEVFHINKP…INDDDDGFFD (191 aa).

Belongs to the phosducin family. In terms of assembly, interacts with the G protein beta-gamma subunit complex (STE4-STE18 complex). Interacts with CCT2; this interaction leads to inhibition of CCT complex mediated actin folding.

The protein resides in the cytoplasm. Essential for cell growth. Inhibits early G-protein signaling events following pheromone stimulation. Inhibits the folding activity of the chaperonin-containing T-complex (CCT) CCT2 which leads to inhibition of cytoskeletal actin folding. Plays a role in cell cycle progression in G1/S phase. The protein is Phosducin-like protein 2 of Saccharomyces cerevisiae (strain ATCC 204508 / S288c) (Baker's yeast).